The sequence spans 240 residues: Pyridoxine 5'-phosphate synthase (240 aa).

Asn-6 contributes to the 3-amino-2-oxopropyl phosphate binding site. 1-deoxy-D-xylulose 5-phosphate is bound at residue 8-9 (DH). A 3-amino-2-oxopropyl phosphate-binding site is contributed by Arg-17. His-42 functions as the Proton acceptor in the catalytic mechanism. The 1-deoxy-D-xylulose 5-phosphate site is built by Arg-44 and His-49. Residue Glu-69 is the Proton acceptor of the active site. Residue Thr-99 participates in 1-deoxy-D-xylulose 5-phosphate binding. The active-site Proton donor is the His-190. Residues Gly-191 and 212–213 (GH) each bind 3-amino-2-oxopropyl phosphate.

It belongs to the PNP synthase family. Homooctamer; tetramer of dimers.

The protein resides in the cytoplasm. The enzyme catalyses 3-amino-2-oxopropyl phosphate + 1-deoxy-D-xylulose 5-phosphate = pyridoxine 5'-phosphate + phosphate + 2 H2O + H(+). It functions in the pathway cofactor biosynthesis; pyridoxine 5'-phosphate biosynthesis; pyridoxine 5'-phosphate from D-erythrose 4-phosphate: step 5/5. Functionally, catalyzes the complicated ring closure reaction between the two acyclic compounds 1-deoxy-D-xylulose-5-phosphate (DXP) and 3-amino-2-oxopropyl phosphate (1-amino-acetone-3-phosphate or AAP) to form pyridoxine 5'-phosphate (PNP) and inorganic phosphate. The sequence is that of Pyridoxine 5'-phosphate synthase from Pseudomonas putida (strain ATCC 700007 / DSM 6899 / JCM 31910 / BCRC 17059 / LMG 24140 / F1).